The sequence spans 240 residues: 2,3,4,5-tetrahydropyridine-2,6-dicarboxylate N-acetyltransferase (240 aa).

This sequence belongs to the transferase hexapeptide repeat family. DapH subfamily.

The enzyme catalyses (S)-2,3,4,5-tetrahydrodipicolinate + acetyl-CoA + H2O = L-2-acetamido-6-oxoheptanedioate + CoA. It participates in amino-acid biosynthesis; L-lysine biosynthesis via DAP pathway; LL-2,6-diaminopimelate from (S)-tetrahydrodipicolinate (acetylase route): step 1/3. Catalyzes the transfer of an acetyl group from acetyl-CoA to tetrahydrodipicolinate. The protein is 2,3,4,5-tetrahydropyridine-2,6-dicarboxylate N-acetyltransferase of Shouchella clausii (strain KSM-K16) (Alkalihalobacillus clausii).